Consider the following 253-residue polypeptide: Imidazole glycerol phosphate synthase subunit HisF (253 aa).

Catalysis depends on residues D11 and D130.

The protein belongs to the HisA/HisF family. In terms of assembly, heterodimer of HisH and HisF.

Its subcellular location is the cytoplasm. The catalysed reaction is 5-[(5-phospho-1-deoxy-D-ribulos-1-ylimino)methylamino]-1-(5-phospho-beta-D-ribosyl)imidazole-4-carboxamide + L-glutamine = D-erythro-1-(imidazol-4-yl)glycerol 3-phosphate + 5-amino-1-(5-phospho-beta-D-ribosyl)imidazole-4-carboxamide + L-glutamate + H(+). It functions in the pathway amino-acid biosynthesis; L-histidine biosynthesis; L-histidine from 5-phospho-alpha-D-ribose 1-diphosphate: step 5/9. IGPS catalyzes the conversion of PRFAR and glutamine to IGP, AICAR and glutamate. The HisF subunit catalyzes the cyclization activity that produces IGP and AICAR from PRFAR using the ammonia provided by the HisH subunit. The polypeptide is Imidazole glycerol phosphate synthase subunit HisF (Geobacter metallireducens (strain ATCC 53774 / DSM 7210 / GS-15)).